The sequence spans 264 residues: Glutamate racemase (264 aa).

Residues 10–11 and 42–43 contribute to the substrate site; these read DS and YG. Cysteine 73 (proton donor/acceptor) is an active-site residue. Position 74 to 75 (74 to 75) interacts with substrate; the sequence is NT. The Proton donor/acceptor role is filled by cysteine 183. Residue 184–185 participates in substrate binding; it reads TH.

This sequence belongs to the aspartate/glutamate racemases family.

The catalysed reaction is L-glutamate = D-glutamate. It participates in cell wall biogenesis; peptidoglycan biosynthesis. In terms of biological role, provides the (R)-glutamate required for cell wall biosynthesis. This Streptococcus uberis (strain ATCC BAA-854 / 0140J) protein is Glutamate racemase.